The sequence spans 247 residues: Complement C1q subcomponent subunit A (247 aa).

The first 24 residues, 1 to 24 (MEAPRGWLVIMISVLAVSLASSAA), serve as a signal peptide directing secretion. Residues 26-116 (DTCRDLDGRD…NPGNIKDQRR (91 aa)) are disordered. The segment covering 27-38 (TCRDLDGRDGAA) has biased composition (basic and acidic residues). In terms of domain architecture, Collagen-like spans 33–111 (GRDGAARKPG…KGIKGNPGNI (79 aa)). Residues Pro41 and Pro47 each carry the 4-hydroxyproline modification. The residue at position 50 (Lys50) is a 5-hydroxylysine. O-linked (Gal...) hydroxylysine glycosylation occurs at Lys50. 4-hydroxyproline occurs at positions 56 and 59. 5-hydroxylysine is present on Lys69. The O-linked (Gal...) hydroxylysine glycan is linked to Lys69. Residues Pro81 and Pro87 each carry the 4-hydroxyproline modification. Positions 98–109 (LPGLKGIKGNPG) are enriched in low complexity. A 5-hydroxylysine modification is found at Lys102. The O-linked (Gal...) hydroxylysine glycan is linked to Lys102. The C1q domain maps to 112–247 (KDQRRPAFSA…FSGFLIFPST (136 aa)). Cysteines 174 and 192 form a disulfide. Gln201 provides a ligand contact to Ca(2+).

As to quaternary structure, core component of the complement C1 complex, a calcium-dependent complex composed of 1 molecule of the C1Q subcomplex, 2 molecules of C1R and 2 molecules of C1S. The C1Q subcomplex is composed 18 subunits: 3 chains of C1QA, C1QB, and C1QC trimerize to form 6 collagen-like triple helices connected to six globular ligand-recognition modules (C1q domain). Interacts with CR1 (via Sushi 24 and Sushi 25 domains). Interacts (via C-terminus) with CD33; this interaction activates CD33 inhibitory motifs. O-linked glycans are assumed to be the Glc-Gal disaccharides typically found as secondary modifications of hydroxylated lysines in collagen-like domains.

It localises to the secreted. It is found in the cell surface. Its activity is regulated as follows. The C1Q subcomplex is inhibited by sulfated molecules, such as triterpenoid sulfates, heparan sulfate, or chondroitin sulfates. Its function is as follows. Core component of the complement C1 complex, a multiprotein complex that initiates the classical pathway of the complement system, a cascade of proteins that leads to phagocytosis and breakdown of pathogens and signaling that strengthens the adaptive immune system. The classical complement pathway is initiated by the C1Q subcomplex of the C1 complex, which specifically binds IgG or IgM immunoglobulins complexed with antigens, forming antigen-antibody complexes on the surface of pathogens: C1QA, together with C1QB and C1QC, specifically recognizes and binds the Fc regions of IgG or IgM via its C1q domain. Immunoglobulin-binding activates the proenzyme C1R, which cleaves C1S, initiating the proteolytic cascade of the complement system. The C1Q subcomplex is activated by a hexamer of IgG complexed with antigens, while it is activated by a pentameric IgM. The C1Q subcomplex also recognizes and binds phosphatidylserine exposed on the surface of cells undergoing programmed cell death, possibly promoting activation of the complement system. The polypeptide is Complement C1q subcomponent subunit A (C1QA) (Sus scrofa (Pig)).